An 82-amino-acid chain; its full sequence is Small ribosomal subunit protein eS27 (82 aa).

Zn(2+) is bound by residues Cys37, Cys40, Cys56, and Cys59.

Belongs to the eukaryotic ribosomal protein eS27 family. In terms of assembly, component of the small ribosomal subunit. Mature ribosomes consist of a small (40S) and a large (60S) subunit. The 40S subunit contains about 32 different proteins and 1 molecule of RNA (18S). The 60S subunit contains 45 different proteins and 3 molecules of RNA (25S, 5.8S and 5S). Requires Zn(2+) as cofactor.

The protein resides in the cytoplasm. In terms of biological role, component of the ribosome, a large ribonucleoprotein complex responsible for the synthesis of proteins in the cell. The small ribosomal subunit (SSU) binds messenger RNAs (mRNAs) and translates the encoded message by selecting cognate aminoacyl-transfer RNA (tRNA) molecules. The large subunit (LSU) contains the ribosomal catalytic site termed the peptidyl transferase center (PTC), which catalyzes the formation of peptide bonds, thereby polymerizing the amino acids delivered by tRNAs into a polypeptide chain. The nascent polypeptides leave the ribosome through a tunnel in the LSU and interact with protein factors that function in enzymatic processing, targeting, and the membrane insertion of nascent chains at the exit of the ribosomal tunnel. This Candida albicans (strain SC5314 / ATCC MYA-2876) (Yeast) protein is Small ribosomal subunit protein eS27 (RPS27).